Here is a 380-residue protein sequence, read N- to C-terminus: Apelin receptor (380 aa).

At 1-30 (MEEGGDFDNYYGADNQSECEYTDWKSSGAL) the chain is on the extracellular side. Asn15 carries an N-linked (GlcNAc...) asparagine glycan. Disulfide bonds link Cys19/Cys281 and Cys102/Cys181. The helical transmembrane segment at 31–54 (IPAIYMLVFLLGTTGNGLVLWTVF) threads the bilayer. Residues 55 to 64 (RSSREKRRSA) are Cytoplasmic-facing. A helical membrane pass occupies residues 65 to 86 (DIFIASLAVADLTFVVTLPLWA). Over 87-99 (TYTYRDYDWPFGT) the chain is Extracellular. The helical transmembrane segment at 100–125 (FFCKLSSYLIFVNMYASVFCLTGLSF) threads the bilayer. Residues 126–146 (DRYLAIVRPVANARLRLRVSG) are Cytoplasmic-facing. Residues 147–164 (AVATAVLWVLAALLAMPV) form a helical membrane-spanning segment. Over 165-198 (MVLRTTGDLENTTKVQCYMDYSMVATVSSEWAWE) the chain is Extracellular. Asn175 is a glycosylation site (N-linked (GlcNAc...) asparagine). A helical membrane pass occupies residues 199–223 (VGLGVSSTTVGFVVPFTIMLTCYFF). Residues 224–246 (IAQTIAGHFRKERIEGLRKRRRL) lie on the Cytoplasmic side of the membrane. A helical membrane pass occupies residues 247–270 (LSIIVVLVVTFALCWMPYHLVKTL). The Extracellular segment spans residues 271-289 (YMLGSLLHWPCDFDLFLMN). A helical transmembrane segment spans residues 290–312 (IFPYCTCISYVNSCLNPFLYAFF). The Cytoplasmic segment spans residues 313–380 (DPRFRQACTS…PYSQETLVVD (68 aa)). Low complexity predominate over residues 342 to 351 (KSASYSSGHS). Residues 342–380 (KSASYSSGHSQGPGPNMGKGGEQMHEKSIPYSQETLVVD) form a disordered region. The span at 371 to 380 (PYSQETLVVD) shows a compositional bias: polar residues.

The protein belongs to the G-protein coupled receptor 1 family. As to quaternary structure, homodimer; dimerization inhibits APLNR-mediated G protein and beta-arrestin signaling pathways compared to monomeric APLNR. In terms of tissue distribution, expressed in heart, brain, kidney, stomach, spleen, thymus, lung, ovary, small intestine and colon, adipose tissues and pancreas. Expressed in glial cells, astrocytes and neuronal subpopulations. Expressed in embryonic (ESCs) and induced (iPSCs) pluripotent stem cells.

Its subcellular location is the cell membrane. Its function is as follows. G protein-coupled receptor for peptide hormones apelin (APLN) and apelin receptor early endogenous ligand (APELA/ELA), that plays a role in the regulation of normal cardiovascular function and fluid homeostasis. When acting as apelin receptor, activates both G(i) protein pathway that inhibits adenylate cyclase activity, and the beta-arrestin pathway that promotes internalization of the receptor. APLNR/APJ also functions as mechanoreceptor that is activated by pathological stimuli in a G-protein-independent fashion to induce beta-arrestin signaling, hence eliciting cardiac hypertrophy. However, the presence of apelin ligand blunts cardiac hypertrophic induction from APLNR/APJ on response to pathological stimuli. Plays a key role in early development such as gastrulation, blood vessels formation and heart morphogenesis by acting as a APELA receptor. May promote angioblast migration toward the embryonic midline, i.e. the position of the future vessel formation, during vasculogenesis. Promotes sinus venosus (SV)-derived endothelial cells migration into the developing heart to promote coronary blood vessel development. Also plays a role in various processes in adults such as regulation of blood vessel formation, blood pressure, heart contractility and heart failure. In terms of biological role, (Microbial infection) Alternative coreceptor with CD4 for HIV-1 infection; may be involved in the development of AIDS dementia. This Homo sapiens (Human) protein is Apelin receptor.